The primary structure comprises 98 residues: HssA/B-like protein 33 (98 aa).

Disordered regions lie at residues 1–29 (MTLF…SGTS) and 60–98 (AKSS…SCSC). Positions 60 to 72 (AKSSGGSCGGKGG) are enriched in gly residues. Residues 73 to 88 (PHNHGHGNGHGPHGHG) are compositionally biased toward basic residues. Residues 89–98 (GKGSGGSCSC) are compositionally biased toward gly residues.

It belongs to the hssA/B family.

The chain is HssA/B-like protein 33 (hssl33) from Dictyostelium discoideum (Social amoeba).